Reading from the N-terminus, the 227-residue chain is UPF0659 protein YMR090W (227 aa).

It belongs to the UPF0659 family.

It is found in the cytoplasm. The chain is UPF0659 protein YMR090W from Saccharomyces cerevisiae (strain ATCC 204508 / S288c) (Baker's yeast).